The sequence spans 506 residues: Maturase K (506 aa).

Belongs to the intron maturase 2 family. MatK subfamily.

The protein localises to the plastid. Its subcellular location is the chloroplast. Usually encoded in the trnK tRNA gene intron. Probably assists in splicing its own and other chloroplast group II introns. The protein is Maturase K of Trifolium beckwithii (Beckwith's clover).